A 313-amino-acid chain; its full sequence is Ketimine reductase mu-crystallin (313 aa).

Residue Arg-47 participates in 3,3',5-triiodo-L-thyronine binding. Residues Ser-90, His-91, Arg-118, Ala-143, Val-145, Gln-146, Asn-167, Arg-168, Thr-169, Asn-172, Thr-204, Met-205, and Val-225 each coordinate NADPH. Glu-256 contacts 3,3',5-triiodo-L-thyronine. Ser-291 contributes to the NADPH binding site.

The protein belongs to the ornithine cyclodeaminase/mu-crystallin family. Homodimer. Binds the thyroid hormone triiodothyronine (T3); T3 binding inhibits enzymatic activity. As to expression, expressed in the spiral ligament of the cochlea (at protein level).

It localises to the cytoplasm. It catalyses the reaction L-pipecolate + NADP(+) = Delta(1)-piperideine-2-carboxylate + NADPH + H(+). The enzyme catalyses L-pipecolate + NAD(+) = Delta(1)-piperideine-2-carboxylate + NADH + H(+). The catalysed reaction is L-proline + NADP(+) = 1-pyrroline-2-carboxylate + NADPH + H(+). It carries out the reaction L-proline + NAD(+) = 1-pyrroline-2-carboxylate + NADH + H(+). It catalyses the reaction (3R)-1,4-thiomorpholine-3-carboxylate + NAD(+) = 3,4-dehydrothiomorpholine-3-carboxylate + NADH + 2 H(+). The enzyme catalyses (3R)-1,4-thiomorpholine-3-carboxylate + NADP(+) = 3,4-dehydrothiomorpholine-3-carboxylate + NADPH + 2 H(+). The catalysed reaction is (S)-cystathionine ketimine + NADH + 2 H(+) = (3R,5S)-2,3,5,6,7-pentahydro-1,4-thiazepine-3,5-dicarboxylate + NAD(+). It carries out the reaction (S)-cystathionine ketimine + NADPH + 2 H(+) = (3R,5S)-2,3,5,6,7-pentahydro-1,4-thiazepine-3,5-dicarboxylate + NADP(+). It catalyses the reaction (R)-lanthionine ketimine + NADPH + 2 H(+) = (3R,5R)-1,4-thiomorpholine-3,5-dicarboxylate + NADP(+). The enzyme catalyses Delta(2)-thiazoline-2-carboxylate + NADPH + 2 H(+) = L-thiazolidine-2-carboxylate + NADP(+). Catalyzes the NAD(P)H-dependent reduction of imine double bonds of a number of cyclic ketimine substrates, including sulfur-containing cyclic ketimines. Under physiological conditions, it efficiently catalyzes delta(1)-piperideine-2-carboxylate (P2C) and delta(1)-pyrroline-2-carboxylate (Pyr2C) reduction, suggesting a central role in lysine and glutamate metabolism. Additional substrates are delta(2)-thiazoline-2-carboxylate (T2C), 3,4-dehydrothiomorpholine-3-carboxylate (AECK), and (R)-lanthionine ketimine (LK) that is reduced at very low rate compared to other substrates. Also catalyzes the NAD(P)H-dependent reduction of (S)-cystathionine ketimine (CysK). In Mus musculus (Mouse), this protein is Ketimine reductase mu-crystallin.